Consider the following 96-residue polypeptide: Phosphoribosyl-ATP pyrophosphatase (96 aa).

It belongs to the PRA-PH family.

It is found in the cytoplasm. It carries out the reaction 1-(5-phospho-beta-D-ribosyl)-ATP + H2O = 1-(5-phospho-beta-D-ribosyl)-5'-AMP + diphosphate + H(+). Its pathway is amino-acid biosynthesis; L-histidine biosynthesis; L-histidine from 5-phospho-alpha-D-ribose 1-diphosphate: step 2/9. In Methanobrevibacter smithii (strain ATCC 35061 / DSM 861 / OCM 144 / PS), this protein is Phosphoribosyl-ATP pyrophosphatase.